Consider the following 346-residue polypeptide: Probable disease resistance protein At5g45440 (346 aa).

Residues 38-116 (KQVEDRVETD…AYAPRIWVSM (79 aa)) form the NB-ARC domain. Residue 85–92 (GEYGVGKT) participates in ATP binding. Positions 315–346 (FDDGKANQNGSKDGKTDSVDNPNSEESKTKPL) are disordered.

In terms of biological role, possible disease resistance protein. The sequence is that of Probable disease resistance protein At5g45440 from Arabidopsis thaliana (Mouse-ear cress).